The primary structure comprises 407 residues: Biflaviolin synthase CYP158A1 (407 aa).

Polar residues predominate over residues 1–11; sequence MTQETTTLTGQ. The segment at 1-20 is disordered; it reads MTQETTTLTGQSPPPVRDWP. Flaviolin is bound by residues Arg-92, Tyr-199, and 290–291; that span reads HR. Cys-356 contacts heme.

This sequence belongs to the cytochrome P450 family. The cofactor is heme.

The enzyme catalyses 2 flaviolin + 2 reduced [2Fe-2S]-[ferredoxin] + O2 + H(+) = 3,3'-biflaviolin + 2 oxidized [2Fe-2S]-[ferredoxin] + 2 H2O. The catalysed reaction is 2 flaviolin + 2 reduced [2Fe-2S]-[ferredoxin] + O2 + H(+) = 3,8'-biflaviolin + 2 oxidized [2Fe-2S]-[ferredoxin] + 2 H2O. It participates in pigment biosynthesis. Functionally, catalyzes oxidative C-C coupling reaction to polymerize flaviolin and form highly conjugated pigments which protect the soil bacterium from deleterious effects of UV irradiation (two isomers of biflaviolin and one triflaviolin). This Streptomyces coelicolor (strain ATCC BAA-471 / A3(2) / M145) protein is Biflaviolin synthase CYP158A1.